The following is a 525-amino-acid chain: GMP synthase [glutamine-hydrolyzing] (525 aa).

The region spanning 9 to 207 (RILILDFGSQ…VLDICQCEAL (199 aa)) is the Glutamine amidotransferase type-1 domain. Residue Cys86 is the Nucleophile of the active site. Catalysis depends on residues His181 and Glu183. Residues 208 to 400 (WTPAKIIDDA…LGLPYNMLYR (193 aa)) form the GMPS ATP-PPase domain. Residue 235–241 (SGGVDSS) coordinates ATP.

Homodimer.

It carries out the reaction XMP + L-glutamine + ATP + H2O = GMP + L-glutamate + AMP + diphosphate + 2 H(+). It functions in the pathway purine metabolism; GMP biosynthesis; GMP from XMP (L-Gln route): step 1/1. Catalyzes the synthesis of GMP from XMP. This chain is GMP synthase [glutamine-hydrolyzing], found in Pectobacterium atrosepticum (strain SCRI 1043 / ATCC BAA-672) (Erwinia carotovora subsp. atroseptica).